We begin with the raw amino-acid sequence, 672 residues long: Glycerophosphocholine phosphodiesterase GPCPD1 (672 aa).

Residues 1-115 (MTPSQVAFEI…IIIDDGQFGI (115 aa)) form the CBM20 domain. Residues lysine 70 and 88–89 (HK) contribute to the substrate site. 2 positions are modified to phosphoserine: serine 175 and serine 424. Residues 318–618 (PLDVGHRGAG…DRIYDWMPEQ (301 aa)) form the GP-PDE domain. Tyrosine 608 is modified (phosphotyrosine).

Belongs to the glycerophosphoryl diester phosphodiesterase family. Widely expressed, with highest expression in spinal chord.

The protein resides in the cytoplasm. It is found in the cytosol. It catalyses the reaction sn-glycerol 3-phosphocholine + H2O = sn-glycerol 3-phosphate + choline + H(+). In terms of biological role, may be involved in the negative regulation of skeletal muscle differentiation, independently of its glycerophosphocholine phosphodiesterase activity. The protein is Glycerophosphocholine phosphodiesterase GPCPD1 (GPCPD1) of Homo sapiens (Human).